Here is a 643-residue protein sequence, read N- to C-terminus: Threonine--tRNA ligase (643 aa).

Positions 1–61 constitute a TGS domain; that stretch reads MIKVTLKDGS…KEDVSLSICT (61 aa). A catalytic region spans residues 240 to 540; it reads DHNKLGRELK…LIEKYAGAFP (301 aa). Residues C335, H386, and H517 each coordinate Zn(2+).

This sequence belongs to the class-II aminoacyl-tRNA synthetase family. Homodimer. Requires Zn(2+) as cofactor.

The protein resides in the cytoplasm. It catalyses the reaction tRNA(Thr) + L-threonine + ATP = L-threonyl-tRNA(Thr) + AMP + diphosphate + H(+). Functionally, catalyzes the attachment of threonine to tRNA(Thr) in a two-step reaction: L-threonine is first activated by ATP to form Thr-AMP and then transferred to the acceptor end of tRNA(Thr). Also edits incorrectly charged L-seryl-tRNA(Thr). This chain is Threonine--tRNA ligase, found in Clostridium botulinum (strain Eklund 17B / Type B).